The chain runs to 305 residues: N-acetylneuraminate lyase 2 (305 aa).

2 residues coordinate aceneuramate: Ser-47 and Thr-48. Tyr-137 serves as the catalytic Proton donor. The Schiff-base intermediate with substrate role is filled by Lys-165. Positions 167, 189, 191, 192, and 208 each coordinate aceneuramate.

The protein belongs to the DapA family. NanA subfamily. As to quaternary structure, homotetramer.

The protein resides in the cytoplasm. The catalysed reaction is aceneuramate = aldehydo-N-acetyl-D-mannosamine + pyruvate. The protein operates within amino-sugar metabolism; N-acetylneuraminate degradation; D-fructose 6-phosphate from N-acetylneuraminate: step 1/5. Functionally, catalyzes the reversible aldol cleavage of N-acetylneuraminic acid (sialic acid; Neu5Ac) to form pyruvate and N-acetylmannosamine (ManNAc) via a Schiff base intermediate. The sequence is that of N-acetylneuraminate lyase 2 from Escherichia coli O6:H1 (strain CFT073 / ATCC 700928 / UPEC).